A 182-amino-acid polypeptide reads, in one-letter code: Prorelaxin (182 aa).

An N-terminal signal peptide occupies residues 1-24 (MPRLFSYLLGVWLLLSQLPREIPG). Glutamine 25 carries the post-translational modification Pyrrolidone carboxylic acid. Cystine bridges form between cysteine 34-cysteine 169, cysteine 46-cysteine 182, and cysteine 168-cysteine 173. The propeptide at 57–154 (SLEEPQLETG…LKNLGLDKHS (98 aa)) is connecting peptide. Residues 159-160 (LF) constitute a propeptide that is removed on maturation.

It belongs to the insulin family. As to quaternary structure, heterodimer of a B chain and an A chain linked by two disulfide bonds.

It localises to the secreted. Relaxin is an ovarian hormone that acts with estrogen to produce dilatation of the birth canal in many mammals. The chain is Prorelaxin (RLN) from Sus scrofa (Pig).